Consider the following 94-residue polypeptide: Cystatin-A3 (94 aa).

Positions 46–50 (QLVNG) match the Secondary area of contact motif.

This sequence belongs to the cystatin family.

The protein resides in the cytoplasm. Intracellular thiol proteinase inhibitor. This Dictyostelium discoideum (Social amoeba) protein is Cystatin-A3 (cpiC).